The primary structure comprises 789 residues: Phenylalanine--tRNA ligase beta subunit (789 aa).

The tRNA-binding domain occupies 38 to 151 (KKHLQSFVVV…NTYNVGESFF (114 aa)). In terms of domain architecture, B5 spans 398–474 (HNDILLNFSP…RLYGYDKILE (77 aa)). 4 residues coordinate Mg(2+): Asp452, Asp458, Glu461, and Glu462. Residues 694-787 (LRYQSVKRDF…ISKGFNGILR (94 aa)) form the FDX-ACB domain.

This sequence belongs to the phenylalanyl-tRNA synthetase beta subunit family. Type 1 subfamily. In terms of assembly, tetramer of two alpha and two beta subunits. Mg(2+) serves as cofactor.

Its subcellular location is the cytoplasm. The enzyme catalyses tRNA(Phe) + L-phenylalanine + ATP = L-phenylalanyl-tRNA(Phe) + AMP + diphosphate + H(+). This chain is Phenylalanine--tRNA ligase beta subunit, found in Ehrlichia ruminantium (strain Gardel).